Reading from the N-terminus, the 1149-residue chain is ATP-dependent helicase/deoxyribonuclease subunit B (1149 aa).

Residues 1–276 (MAIRYIFGRA…INLDIEERKV (276 aa)) enclose the UvrD-like helicase ATP-binding domain. 8–15 (GRAGRGKS) contacts ATP. Positions 273-586 (ERKVLPKEKE…LVGSIERSKS (314 aa)) constitute a UvrD-like helicase C-terminal domain. Cys786, Cys1105, Cys1108, and Cys1114 together coordinate [4Fe-4S] cluster.

This sequence belongs to the helicase family. AddB/RexB type 1 subfamily. In terms of assembly, heterodimer of AddA and AddB. Mg(2+) serves as cofactor. Requires [4Fe-4S] cluster as cofactor.

The heterodimer acts as both an ATP-dependent DNA helicase and an ATP-dependent, dual-direction single-stranded exonuclease. Recognizes the chi site generating a DNA molecule suitable for the initiation of homologous recombination. The AddB subunit has 5' -&gt; 3' nuclease activity but not helicase activity. In Alkaliphilus metalliredigens (strain QYMF), this protein is ATP-dependent helicase/deoxyribonuclease subunit B.